A 199-amino-acid chain; its full sequence is Phosphoheptose isomerase (199 aa).

The SIS domain maps to 36–198 (MSQCLLNEHK…DRKLIPSSED (163 aa)). Substrate is bound at residue 51 to 53 (NGG). Zn(2+) is bound by residues His-60 and Glu-64. Residues Glu-64, 93-94 (ND), 119-121 (STS), Ser-124, and Gln-174 contribute to the substrate site. Positions 174 and 182 each coordinate Zn(2+).

The protein belongs to the SIS family. GmhA subfamily. Homotetramer. Requires Zn(2+) as cofactor.

It is found in the cytoplasm. The enzyme catalyses 2 D-sedoheptulose 7-phosphate = D-glycero-alpha-D-manno-heptose 7-phosphate + D-glycero-beta-D-manno-heptose 7-phosphate. It participates in carbohydrate biosynthesis; D-glycero-D-manno-heptose 7-phosphate biosynthesis; D-glycero-alpha-D-manno-heptose 7-phosphate and D-glycero-beta-D-manno-heptose 7-phosphate from sedoheptulose 7-phosphate: step 1/1. Catalyzes the isomerization of sedoheptulose 7-phosphate in D-glycero-D-manno-heptose 7-phosphate. The polypeptide is Phosphoheptose isomerase (Coxiella burnetii (strain RSA 331 / Henzerling II)).